The sequence spans 753 residues: Probable tubulin--tyrosine ligase PBY1 (753 aa).

Residues 343 to 734 enclose the TTL domain; it reads MEYIYKPLTH…PIFNENRNKT (392 aa).

The protein belongs to the tubulin--tyrosine ligase family. Mg(2+) serves as cofactor. The cofactor is K(+).

Its subcellular location is the cytoplasm. The protein localises to the P-body. It carries out the reaction C-terminal L-alpha-aminoacyl-L-glutamyl-L-glutamyl-[tubulin] + L-tyrosine + ATP = C-terminal L-alpha-aminoacyl-L-glutamyl-L-glutamyl-L-tyrosyl-[tubulin] + ADP + phosphate + H(+). Functionally, probable P-body-associated tubulin--tyrosine ligase. The sequence is that of Probable tubulin--tyrosine ligase PBY1 (PBY1) from Saccharomyces cerevisiae (strain ATCC 204508 / S288c) (Baker's yeast).